The sequence spans 323 residues: E3 ubiquitin-protein ligase makorin (323 aa).

2 consecutive C3H1-type zinc fingers follow at residues 1–28 (MSDR…HDSK) and 29–56 (DPPN…HVRA). The span at 62 to 74 (LSSDSESLDRSIS) shows a compositional bias: low complexity. The tract at residues 62 to 92 (LSSDSESLDRSISTTPSRHLQQQGDNNDGDK) is disordered. Residues 75 to 87 (TTPSRHLQQQGDN) are compositionally biased toward polar residues. The C3H1-type 3 zinc-finger motif lies at 101–128 (PREYPICSFAAAGDCPRGNQCPHMHGDL). The makorin-type Cys-His stretch occupies residues 129–158 (CNTCGKKCLHPFRPEEREEHTKECEKKQKH). Residues 170–228 (CSVCLDRILSKATPGERKFGLLTECDHPFCIQCIRNWRSSAPVSGMDVNSTLRACPICR) form an RING-type zinc finger. The C3H1-type 4 zinc-finger motif lies at 257–286 (KLRSIDCKHFNFGNGNCPFGASCFYKHAYS).

The enzyme catalyses S-ubiquitinyl-[E2 ubiquitin-conjugating enzyme]-L-cysteine + [acceptor protein]-L-lysine = [E2 ubiquitin-conjugating enzyme]-L-cysteine + N(6)-ubiquitinyl-[acceptor protein]-L-lysine.. It functions in the pathway protein modification; protein ubiquitination. Functionally, E3 ubiquitin ligase catalyzing the covalent attachment of ubiquitin moieties onto substrate proteins. The chain is E3 ubiquitin-protein ligase makorin (MKRN) from Arabidopsis thaliana (Mouse-ear cress).